Reading from the N-terminus, the 156-residue chain is Ribosome-binding factor A (156 aa).

Residues A129–R156 are disordered.

It belongs to the RbfA family. In terms of assembly, monomer. Binds 30S ribosomal subunits, but not 50S ribosomal subunits or 70S ribosomes.

It is found in the cytoplasm. Functionally, one of several proteins that assist in the late maturation steps of the functional core of the 30S ribosomal subunit. Associates with free 30S ribosomal subunits (but not with 30S subunits that are part of 70S ribosomes or polysomes). Required for efficient processing of 16S rRNA. May interact with the 5'-terminal helix region of 16S rRNA. The protein is Ribosome-binding factor A of Salinispora arenicola (strain CNS-205).